A 340-amino-acid polypeptide reads, in one-letter code: S-adenosylmethionine:tRNA ribosyltransferase-isomerase (340 aa).

Belongs to the QueA family. Monomer.

It localises to the cytoplasm. It carries out the reaction 7-aminomethyl-7-carbaguanosine(34) in tRNA + S-adenosyl-L-methionine = epoxyqueuosine(34) in tRNA + adenine + L-methionine + 2 H(+). It functions in the pathway tRNA modification; tRNA-queuosine biosynthesis. Functionally, transfers and isomerizes the ribose moiety from AdoMet to the 7-aminomethyl group of 7-deazaguanine (preQ1-tRNA) to give epoxyqueuosine (oQ-tRNA). The sequence is that of S-adenosylmethionine:tRNA ribosyltransferase-isomerase from Chlorobaculum parvum (strain DSM 263 / NCIMB 8327) (Chlorobium vibrioforme subsp. thiosulfatophilum).